The chain runs to 245 residues: LOB domain-containing protein 16 (245 aa).

Residues 14–116 (SPCGACKFLR…SQVMQMKAQI (103 aa)) enclose the LOB domain. Positions 162–183 (YYGHVNPNNPVSPQSSLEESFS) are disordered.

Belongs to the LOB domain-containing protein family. As to quaternary structure, homodimer and heterodimer with LBD18. In terms of tissue distribution, expressed in roots and faintly in shoots.

It is found in the nucleus. Its function is as follows. Transcriptional activator. Involved in lateral root formation. Regulated by the transcriptional activators ARF7 and ARF19. Functions in the initiation and emergence of lateral roots, in conjunction with LBD18, downstream of ARF7 and ARF19. Acts downstream of the auxin influx carriers AUX1 and LAX1 in the regulation of lateral root initiation and development. This chain is LOB domain-containing protein 16 (LBD16), found in Arabidopsis thaliana (Mouse-ear cress).